The chain runs to 269 residues: Lipid II flippase Amj (269 aa).

7 helical membrane-spanning segments follow: residues 1-21 (MHVI…IHSI), 31-51 (SGAR…MVIV), 84-104 (FLIF…PSFV), 105-125 (ALFS…FQVF), 161-181 (LFVI…SALY), 192-212 (TAVM…AIFV), and 245-265 (VAGT…IAWL).

This sequence belongs to the Amj family.

It is found in the cell membrane. It participates in cell wall biogenesis; peptidoglycan biosynthesis. Involved in peptidoglycan biosynthesis. Transports lipid-linked peptidoglycan precursors from the inner to the outer leaflet of the cytoplasmic membrane. May serve as a defense mechanism against naturally occurring MurJ antagonists. This chain is Lipid II flippase Amj, found in Bacillus subtilis (strain 168).